A 33-amino-acid chain; its full sequence is Mu-theraphotoxin-Ssp1a (33 aa).

3 cysteine pairs are disulfide-bonded: Cys2-Cys17, Cys9-Cys22, and Cys16-Cys29. Leu33 bears the Leucine amide mark.

It belongs to the neurotoxin 10 (Hwtx-1) family. 22 (Htx-4) subfamily. In terms of tissue distribution, expressed by the venom gland.

It is found in the secreted. Gating modifier toxin that traps voltage-sensing domain II of voltage-gated sodium channels in the resting state without significantly altering the voltage-dependence of activation and inactivation, or delay in recovery from inactivation. Inhibits hNav1.7/SCN9A (IC(50)=134 nM), followed in rank order of potency by Nav1.6/SCN8A (IC(50)=191 nM), Nav1.2/SCN2A (IC(50)=239 nM), Nav1.3/SCN3A (IC(50)=547 nM) and Nav1.1/SCN1A (IC(50)=674 nM). Its binding to Nav1.2, Nav1.3 and Nav1.7 is slowly reversible and incomplete, with ~25% of Nav1.2, ~50% of Nav1.3 and ~40% of Nav1.7 channels recovering from block after a 30 minutes washout, respectively. Binds in the aqueous cleft formed between the S1-S2 and S3-S4 loops of each channel subtype, primarily targeting the S3-S4 loop. This Selenotypus sp. (Feather-legged tarantula) protein is Mu-theraphotoxin-Ssp1a.